Reading from the N-terminus, the 261-residue chain is Indole-3-glycerol phosphate synthase (261 aa).

It belongs to the TrpC family.

It carries out the reaction 1-(2-carboxyphenylamino)-1-deoxy-D-ribulose 5-phosphate + H(+) = (1S,2R)-1-C-(indol-3-yl)glycerol 3-phosphate + CO2 + H2O. Its pathway is amino-acid biosynthesis; L-tryptophan biosynthesis; L-tryptophan from chorismate: step 4/5. This is Indole-3-glycerol phosphate synthase from Alkaliphilus metalliredigens (strain QYMF).